The primary structure comprises 325 residues: UPF0285 protein MMP0642 (325 aa).

This sequence belongs to the UPF0285 family.

This chain is UPF0285 protein MMP0642, found in Methanococcus maripaludis (strain DSM 14266 / JCM 13030 / NBRC 101832 / S2 / LL).